Consider the following 507-residue polypeptide: Proline--tRNA ligase (507 aa).

It belongs to the class-II aminoacyl-tRNA synthetase family. ProS type 3 subfamily. In terms of assembly, homodimer.

The protein resides in the cytoplasm. The catalysed reaction is tRNA(Pro) + L-proline + ATP = L-prolyl-tRNA(Pro) + AMP + diphosphate. Functionally, catalyzes the attachment of proline to tRNA(Pro) in a two-step reaction: proline is first activated by ATP to form Pro-AMP and then transferred to the acceptor end of tRNA(Pro). The chain is Proline--tRNA ligase from Protochlamydia amoebophila (strain UWE25).